A 426-amino-acid polypeptide reads, in one-letter code: Histidine--tRNA ligase (426 aa).

This sequence belongs to the class-II aminoacyl-tRNA synthetase family. In terms of assembly, homodimer.

The protein localises to the cytoplasm. It carries out the reaction tRNA(His) + L-histidine + ATP = L-histidyl-tRNA(His) + AMP + diphosphate + H(+). This chain is Histidine--tRNA ligase, found in Prochlorococcus marinus (strain MIT 9301).